Consider the following 495-residue polypeptide: MVKTVDFNGRPFHFIGIGGIGMSGLAYILAKRHLPVSGSDVRSSHITQRLQSVGAKVFNTQEATNLTIFQPTPEDSLTTLIPCASGESKKVEKTHQADSALSPNSLPQIICSTAIADNNSEYQAAKELGYPIFHRSDVLAALIKDYYSIGVAGTHGKTTTSSLIGYMLLGGGLDPTIIVGGEVDAWDGNARLGQGQFLVAEVDESDGSLTKHSPRIGIITNIELDHPDHYQTLDEVVKTFQIFEQQCETLIACIDCKTVRTHFKPQITYSLDPDREADYTVKNVTYKTDGSMAEVWEKGQYLGQMHISLLGQHNISNALAAVAVGRTLGLDFEVIASGIATFIGAKRRFEHKGYSQGITFIDDYAHHPSEVRCTLEAARLRLDQDRYRRVVAIFQPHRYSRTATFMDEFATSFDDADVVIVTDIYSAGEVNIGQISGQQVADAISRHHQQVFYHPSLKSLGSFLSQILEPGDLALFLGAGNLNQIIPELISPKVA.

153-159 (GTHGKTT) lines the ATP pocket.

This sequence belongs to the MurCDEF family.

The protein localises to the cytoplasm. The catalysed reaction is UDP-N-acetyl-alpha-D-muramate + L-alanine + ATP = UDP-N-acetyl-alpha-D-muramoyl-L-alanine + ADP + phosphate + H(+). It participates in cell wall biogenesis; peptidoglycan biosynthesis. Cell wall formation. The chain is UDP-N-acetylmuramate--L-alanine ligase from Gloeothece citriformis (strain PCC 7424) (Cyanothece sp. (strain PCC 7424)).